Here is a 446-residue protein sequence, read N- to C-terminus: Bifunctional protein GlmU (446 aa).

Residues 1-226 (MLAIAILAAG…PFEIKGINDR (226 aa)) are pyrophosphorylase. Residues 7–10 (LAAG), Lys-21, Gln-73, and 78–79 (GT) contribute to the UDP-N-acetyl-alpha-D-glucosamine site. Asp-103 contributes to the Mg(2+) binding site. UDP-N-acetyl-alpha-D-glucosamine is bound by residues Gly-140, Glu-155, Asn-170, and Asn-224. Asn-224 provides a ligand contact to Mg(2+). Positions 227-247 (VQLSECEHYIQEELKSLWMSK) are linker. An N-acetyltransferase region spans residues 248-446 (GVSFVDPISC…SKAIIRTKAD (199 aa)). Arg-329 and Lys-347 together coordinate UDP-N-acetyl-alpha-D-glucosamine. Catalysis depends on His-359, which acts as the Proton acceptor. The UDP-N-acetyl-alpha-D-glucosamine site is built by Tyr-362 and Asn-373. Acetyl-CoA-binding residues include Ala-376, Ala-419, and Arg-436.

It in the N-terminal section; belongs to the N-acetylglucosamine-1-phosphate uridyltransferase family. This sequence in the C-terminal section; belongs to the transferase hexapeptide repeat family. As to quaternary structure, homotrimer. The cofactor is Mg(2+).

Its subcellular location is the cytoplasm. The enzyme catalyses alpha-D-glucosamine 1-phosphate + acetyl-CoA = N-acetyl-alpha-D-glucosamine 1-phosphate + CoA + H(+). The catalysed reaction is N-acetyl-alpha-D-glucosamine 1-phosphate + UTP + H(+) = UDP-N-acetyl-alpha-D-glucosamine + diphosphate. Its pathway is nucleotide-sugar biosynthesis; UDP-N-acetyl-alpha-D-glucosamine biosynthesis; N-acetyl-alpha-D-glucosamine 1-phosphate from alpha-D-glucosamine 6-phosphate (route II): step 2/2. It functions in the pathway nucleotide-sugar biosynthesis; UDP-N-acetyl-alpha-D-glucosamine biosynthesis; UDP-N-acetyl-alpha-D-glucosamine from N-acetyl-alpha-D-glucosamine 1-phosphate: step 1/1. It participates in bacterial outer membrane biogenesis; LPS lipid A biosynthesis. Catalyzes the last two sequential reactions in the de novo biosynthetic pathway for UDP-N-acetylglucosamine (UDP-GlcNAc). The C-terminal domain catalyzes the transfer of acetyl group from acetyl coenzyme A to glucosamine-1-phosphate (GlcN-1-P) to produce N-acetylglucosamine-1-phosphate (GlcNAc-1-P), which is converted into UDP-GlcNAc by the transfer of uridine 5-monophosphate (from uridine 5-triphosphate), a reaction catalyzed by the N-terminal domain. This is Bifunctional protein GlmU from Prochlorococcus marinus (strain NATL2A).